The chain runs to 23 residues: Magainin-R2 (23 aa).

In terms of tissue distribution, expressed by the skin glands.

It is found in the secreted. In terms of biological role, antimicrobial peptide. This is Magainin-R2 from Xenopus ruwenzoriensis (Uganda clawed frog).